The primary structure comprises 434 residues: Nicotinate phosphoribosyltransferase (434 aa).

Histidine 242 is modified (phosphohistidine; by autocatalysis).

It belongs to the NAPRTase family. Transiently phosphorylated on a His residue during the reaction cycle. Phosphorylation strongly increases the affinity for substrates and increases the rate of nicotinate D-ribonucleotide production. Dephosphorylation regenerates the low-affinity form of the enzyme, leading to product release.

The catalysed reaction is nicotinate + 5-phospho-alpha-D-ribose 1-diphosphate + ATP + H2O = nicotinate beta-D-ribonucleotide + ADP + phosphate + diphosphate. It functions in the pathway cofactor biosynthesis; NAD(+) biosynthesis; nicotinate D-ribonucleotide from nicotinate: step 1/1. Its function is as follows. Catalyzes the synthesis of beta-nicotinate D-ribonucleotide from nicotinate and 5-phospho-D-ribose 1-phosphate at the expense of ATP. This chain is Nicotinate phosphoribosyltransferase, found in Brucella melitensis biotype 1 (strain ATCC 23456 / CCUG 17765 / NCTC 10094 / 16M).